The chain runs to 116 residues: uncharacterized protein (116 aa).

The chain crosses the membrane as a helical span at residues I58–A78.

The protein localises to the membrane. This is an uncharacterized protein from Rickettsia prowazekii (strain Madrid E).